The chain runs to 359 residues: Phosphoserine aminotransferase (359 aa).

Residue R41 participates in L-glutamate binding. Residues A75 to S76, W101, T152, D171, and Q194 contribute to the pyridoxal 5'-phosphate site. The residue at position 195 (K195) is an N6-(pyridoxal phosphate)lysine. N236 to T237 contributes to the pyridoxal 5'-phosphate binding site.

The protein belongs to the class-V pyridoxal-phosphate-dependent aminotransferase family. SerC subfamily. As to quaternary structure, homodimer. Pyridoxal 5'-phosphate serves as cofactor.

Its subcellular location is the cytoplasm. The enzyme catalyses O-phospho-L-serine + 2-oxoglutarate = 3-phosphooxypyruvate + L-glutamate. The catalysed reaction is 4-(phosphooxy)-L-threonine + 2-oxoglutarate = (R)-3-hydroxy-2-oxo-4-phosphooxybutanoate + L-glutamate. It functions in the pathway amino-acid biosynthesis; L-serine biosynthesis; L-serine from 3-phospho-D-glycerate: step 2/3. The protein operates within cofactor biosynthesis; pyridoxine 5'-phosphate biosynthesis; pyridoxine 5'-phosphate from D-erythrose 4-phosphate: step 3/5. In terms of biological role, catalyzes the reversible conversion of 3-phosphohydroxypyruvate to phosphoserine and of 3-hydroxy-2-oxo-4-phosphonooxybutanoate to phosphohydroxythreonine. The polypeptide is Phosphoserine aminotransferase (Acinetobacter baylyi (strain ATCC 33305 / BD413 / ADP1)).